Here is a 357-residue protein sequence, read N- to C-terminus: 4-hydroxymandelate oxidase (357 aa).

One can recognise an FMN hydroxy acid dehydrogenase domain in the interval 1 to 357 (MTYVSLADLE…RRLNTKLGVV (357 aa)). Q126 is a binding site for FMN. Y128 provides a ligand contact to a 2-oxocarboxylate. T154 contributes to the FMN binding site. R163 is an a 2-oxocarboxylate binding site. K228 contributes to the FMN binding site. H252 functions as the Proton acceptor in the catalytic mechanism. R255 is an a 2-oxocarboxylate binding site. Residues 283–287 (DGGIR) and 306–307 (GR) each bind FMN.

The protein belongs to the FMN-dependent alpha-hydroxy acid dehydrogenase family. FMN is required as a cofactor.

The enzyme catalyses (S)-4-hydroxymandelate + O2 = 4-hydroxyphenylglyoxylate + H2O2. It participates in antibiotic biosynthesis; vancomycin biosynthesis. In terms of biological role, catalyzes the oxidation of p-hydroxymandelate to p-hydroxybenzoylformate in the biosynthesis of L-(4-hydroxyphenyl)glycine and L-(3,5-dihydroxyphenyl)glycine, 2 non-proteinogenic amino acids occurring in the vancomycin group of antibiotics. The polypeptide is 4-hydroxymandelate oxidase (hmo) (Amycolatopsis orientalis (Nocardia orientalis)).